The chain runs to 378 residues: 5-amino-6-(D-ribitylamino)uracil--L-tyrosine 4-hydroxyphenyl transferase (378 aa).

One can recognise a Radical SAM core domain in the interval 59 to 306; that stretch reads VTYVINRNIN…TAVARIYLGN (248 aa). Cys-73, Cys-77, and Cys-80 together coordinate [4Fe-4S] cluster.

Belongs to the radical SAM superfamily. CofH family. Consists of two subunits, CofG and CofH. Requires [4Fe-4S] cluster as cofactor.

The enzyme catalyses 5-amino-6-(D-ribitylamino)uracil + L-tyrosine + S-adenosyl-L-methionine = 5-amino-5-(4-hydroxybenzyl)-6-(D-ribitylimino)-5,6-dihydrouracil + 2-iminoacetate + 5'-deoxyadenosine + L-methionine + H(+). Its pathway is cofactor biosynthesis; coenzyme F0 biosynthesis. Catalyzes the radical-mediated synthesis of 5-amino-5-(4-hydroxybenzyl)-6-(D-ribitylimino)-5,6-dihydrouracil from 5-amino-6-(D-ribitylamino)uracil and L-tyrosine. This chain is 5-amino-6-(D-ribitylamino)uracil--L-tyrosine 4-hydroxyphenyl transferase, found in Microcystis aeruginosa (strain NIES-843 / IAM M-2473).